The sequence spans 174 residues: Shikimate kinase (174 aa).

Gly-15 to Thr-20 contacts ATP. Ser-19 contributes to the Mg(2+) binding site. Residues Asp-37, Arg-61, and Gly-82 each coordinate substrate. An ATP-binding site is contributed by Arg-120. Arg-138 serves as a coordination point for substrate.

It belongs to the shikimate kinase family. Monomer. Mg(2+) is required as a cofactor.

Its subcellular location is the cytoplasm. The enzyme catalyses shikimate + ATP = 3-phosphoshikimate + ADP + H(+). It functions in the pathway metabolic intermediate biosynthesis; chorismate biosynthesis; chorismate from D-erythrose 4-phosphate and phosphoenolpyruvate: step 5/7. Its function is as follows. Catalyzes the specific phosphorylation of the 3-hydroxyl group of shikimic acid using ATP as a cosubstrate. The sequence is that of Shikimate kinase from Staphylococcus aureus (strain Mu3 / ATCC 700698).